We begin with the raw amino-acid sequence, 238 residues long: tRNA (guanine-N(7)-)-methyltransferase (238 aa).

S-adenosyl-L-methionine is bound by residues Glu68, Glu93, Asp120, and Asp143. Residue Asp143 is part of the active site. Residues Lys147, Asp179, and 216 to 219 (TKFE) each bind substrate.

This sequence belongs to the class I-like SAM-binding methyltransferase superfamily. TrmB family.

It catalyses the reaction guanosine(46) in tRNA + S-adenosyl-L-methionine = N(7)-methylguanosine(46) in tRNA + S-adenosyl-L-homocysteine. Its pathway is tRNA modification; N(7)-methylguanine-tRNA biosynthesis. Catalyzes the formation of N(7)-methylguanine at position 46 (m7G46) in tRNA. In Shewanella baltica (strain OS223), this protein is tRNA (guanine-N(7)-)-methyltransferase.